A 35-amino-acid polypeptide reads, in one-letter code: U1-segestritoxin-Sf1a (35 aa).

Cystine bridges form between cysteine 10-cysteine 22 and cysteine 17-cysteine 28. A keys region for toxin activity region spans residues aspartate 31 to tryptophan 33.

This sequence belongs to the neurotoxin 16 (SFI) family. In terms of tissue distribution, expressed by the venom gland.

The protein localises to the secreted. In terms of biological role, insecticidal toxin. The sequence is that of U1-segestritoxin-Sf1a from Segestria florentina (Tube-web spider).